Consider the following 283-residue polypeptide: Agmatinase (283 aa).

Residues histidine 112, aspartate 131, histidine 133, aspartate 135, aspartate 211, and aspartate 213 each coordinate a divalent metal cation.

Belongs to the arginase family. Agmatinase subfamily. As to quaternary structure, homotetramer. The cofactor is a divalent metal cation.

It carries out the reaction agmatine + H2O = urea + putrescine. The protein operates within amine and polyamine biosynthesis; putrescine biosynthesis via agmatine pathway; putrescine from agmatine: step 1/1. Its activity is regulated as follows. Inhibited by putrescine. Activity is not affected by arginine and ornithine. Its function is as follows. Catalyzes the formation of putrescine from agmatine. Cannot use arginine. The chain is Agmatinase from Pyrococcus horikoshii (strain ATCC 700860 / DSM 12428 / JCM 9974 / NBRC 100139 / OT-3).